A 61-amino-acid polypeptide reads, in one-letter code: MAKSKNHTAHNQSAKAHKNGIKKPRRHRHTPTRGMDPKFLRNQRYARKHNVKSGENAGVEE.

The disordered stretch occupies residues 1 to 61 (MAKSKNHTAH…KSGENAGVEE (61 aa)). A compositionally biased stretch (basic residues) spans 15–31 (KAHKNGIKKPRRHRHTP).

This sequence belongs to the eukaryotic ribosomal protein eL29 family.

This is Large ribosomal subunit protein eL29y (RPL29B) from Arabidopsis thaliana (Mouse-ear cress).